We begin with the raw amino-acid sequence, 456 residues long: Bifunctional protein GlmU (456 aa).

The segment at Met1–Arg229 is pyrophosphorylase. Residues Leu11 to Gly14, Lys25, Gln76, Gly81 to Thr82, Tyr103 to Asp105, Gly140, Glu154, Asn169, and Asn227 each bind UDP-N-acetyl-alpha-D-glucosamine. Asp105 contributes to the Mg(2+) binding site. Residue Asn227 coordinates Mg(2+). Residues Leu230–Ser250 are linker. The tract at residues Gly251 to Lys456 is N-acetyltransferase. Residues Arg333 and Lys351 each coordinate UDP-N-acetyl-alpha-D-glucosamine. The Proton acceptor role is filled by His363. Residues Tyr366 and Asn377 each contribute to the UDP-N-acetyl-alpha-D-glucosamine site. Acetyl-CoA-binding positions include Ala380, Asn386–Tyr387, Ser405, Ala423, and Arg440.

In the N-terminal section; belongs to the N-acetylglucosamine-1-phosphate uridyltransferase family. It in the C-terminal section; belongs to the transferase hexapeptide repeat family. As to quaternary structure, homotrimer. Requires Mg(2+) as cofactor.

It localises to the cytoplasm. The enzyme catalyses alpha-D-glucosamine 1-phosphate + acetyl-CoA = N-acetyl-alpha-D-glucosamine 1-phosphate + CoA + H(+). It carries out the reaction N-acetyl-alpha-D-glucosamine 1-phosphate + UTP + H(+) = UDP-N-acetyl-alpha-D-glucosamine + diphosphate. The protein operates within nucleotide-sugar biosynthesis; UDP-N-acetyl-alpha-D-glucosamine biosynthesis; N-acetyl-alpha-D-glucosamine 1-phosphate from alpha-D-glucosamine 6-phosphate (route II): step 2/2. Its pathway is nucleotide-sugar biosynthesis; UDP-N-acetyl-alpha-D-glucosamine biosynthesis; UDP-N-acetyl-alpha-D-glucosamine from N-acetyl-alpha-D-glucosamine 1-phosphate: step 1/1. It functions in the pathway bacterial outer membrane biogenesis; LPS lipid A biosynthesis. In terms of biological role, catalyzes the last two sequential reactions in the de novo biosynthetic pathway for UDP-N-acetylglucosamine (UDP-GlcNAc). The C-terminal domain catalyzes the transfer of acetyl group from acetyl coenzyme A to glucosamine-1-phosphate (GlcN-1-P) to produce N-acetylglucosamine-1-phosphate (GlcNAc-1-P), which is converted into UDP-GlcNAc by the transfer of uridine 5-monophosphate (from uridine 5-triphosphate), a reaction catalyzed by the N-terminal domain. This chain is Bifunctional protein GlmU, found in Salmonella dublin (strain CT_02021853).